The sequence spans 105 residues: uncharacterized protein (105 aa).

Residues 81 to 105 form a disordered region; that stretch reads NNNNKTITVDNNNNNNNNNNNNNNK.

This is an uncharacterized protein from Dictyostelium discoideum (Social amoeba).